Consider the following 548-residue polypeptide: Chaperonin GroEL 1 (548 aa).

ATP is bound by residues 30 to 33 (TLGP), Lys-51, 87 to 91 (DGTTT), Gly-415, 479 to 481 (NAA), and Asp-495.

The protein belongs to the chaperonin (HSP60) family. As to quaternary structure, forms a cylinder of 14 subunits composed of two heptameric rings stacked back-to-back. Interacts with the co-chaperonin GroES.

It localises to the cytoplasm. It carries out the reaction ATP + H2O + a folded polypeptide = ADP + phosphate + an unfolded polypeptide.. Functionally, together with its co-chaperonin GroES, plays an essential role in assisting protein folding. The GroEL-GroES system forms a nano-cage that allows encapsulation of the non-native substrate proteins and provides a physical environment optimized to promote and accelerate protein folding. The sequence is that of Chaperonin GroEL 1 from Escherichia coli O1:K1 / APEC.